A 296-amino-acid polypeptide reads, in one-letter code: 2-haloacid dehalogenase, configuration-inverting (296 aa).

Belongs to the HAD-like hydrolase superfamily. S-2-haloalkanoic acid dehalogenase family.

It catalyses the reaction an (S)-2-haloacid + H2O = a (2R)-2-hydroxycarboxylate + a halide anion + H(+). The enzyme catalyses an (R)-2-haloacid + H2O = a (2S)-2-hydroxycarboxylate + a halide anion + H(+). In terms of biological role, dehalogenates both (S)- and (R)-2-haloalkanoic acids to the corresponding (R)- and (S)-hydroxyalkanoic acids, respectively, with inversion of configuration at C-2. Acts on 2-haloalkanoic acids whose carbon chain lengths are five or less. The protein is 2-haloacid dehalogenase, configuration-inverting (dhlC) of Alcaligenes xylosoxydans xylosoxydans (Achromobacter xylosoxidans).